Reading from the N-terminus, the 1140-residue chain is Protein FAM184A (1140 aa).

Coiled coils occupy residues 57–256, 296–800, and 868–907; these read ALNT…NKAQ, AILR…IEME, and RITDLQEELRHREHHISELDKEVQHLHENISALTKELEFK. Positions 1063-1128 are disordered; sequence PNLSALESGG…EASPVASPDP (66 aa).

This sequence belongs to the FAM184 family.

The protein localises to the cytoplasm. The protein resides in the P-body. It localises to the cytoskeleton. It is found in the microtubule organizing center. Its subcellular location is the centrosome. The protein localises to the centriolar satellite. The polypeptide is Protein FAM184A (Homo sapiens (Human)).